The primary structure comprises 613 residues: Chaperone protein dnaK (613 aa).

Belongs to the heat shock protein 70 family.

Its subcellular location is the plastid. It is found in the chloroplast. Its function is as follows. Acts as a chaperone. This Phaeodactylum tricornutum (strain CCAP 1055/1) protein is Chaperone protein dnaK.